The following is a 347-amino-acid chain: Phenylalanine--tRNA ligase alpha subunit (347 aa).

Glu-262 contacts Mg(2+).

The protein belongs to the class-II aminoacyl-tRNA synthetase family. Phe-tRNA synthetase alpha subunit type 1 subfamily. As to quaternary structure, tetramer of two alpha and two beta subunits. It depends on Mg(2+) as a cofactor.

The protein localises to the cytoplasm. It carries out the reaction tRNA(Phe) + L-phenylalanine + ATP = L-phenylalanyl-tRNA(Phe) + AMP + diphosphate + H(+). In Roseiflexus sp. (strain RS-1), this protein is Phenylalanine--tRNA ligase alpha subunit.